The sequence spans 239 residues: Small ribosomal subunit protein uS2 (239 aa).

This sequence belongs to the universal ribosomal protein uS2 family.

The protein is Small ribosomal subunit protein uS2 of Prochlorococcus marinus (strain MIT 9313).